Consider the following 459-residue polypeptide: NADH-ubiquinone oxidoreductase chain 4 (459 aa).

The next 13 membrane-spanning stretches (helical) occupy residues 22–42 (MIWI…LLFF), 60–80 (PLTT…IMAS), 94–112 (LYLS…TFTA), 113–133 (TELI…LVII), 145–165 (AGTY…IALI), 196–216 (WLAY…HLWL), 224–244 (PIAG…YGMM), 257–277 (MAYP…SISL), 284–303 (SLIA…AILI), 308–330 (SFTG…FCLA), 351–371 (LLPL…ALPP), 391–411 (TTLL…LYMF), and 435–455 (ILMF…DIIT).

It belongs to the complex I subunit 4 family. In terms of assembly, core subunit of respiratory chain NADH dehydrogenase (Complex I) which is composed of 45 different subunits.

The protein resides in the mitochondrion inner membrane. The catalysed reaction is a ubiquinone + NADH + 5 H(+)(in) = a ubiquinol + NAD(+) + 4 H(+)(out). Core subunit of the mitochondrial membrane respiratory chain NADH dehydrogenase (Complex I) which catalyzes electron transfer from NADH through the respiratory chain, using ubiquinone as an electron acceptor. Essential for the catalytic activity and assembly of complex I. In Gorilla gorilla gorilla (Western lowland gorilla), this protein is NADH-ubiquinone oxidoreductase chain 4 (MT-ND4).